Reading from the N-terminus, the 128-residue chain is Sulfurtransferase TusD (128 aa).

The active-site Cysteine persulfide intermediate is the Cys-78.

Belongs to the DsrE/TusD family. In terms of assembly, heterohexamer, formed by a dimer of trimers. The hexameric TusBCD complex contains 2 copies each of TusB, TusC and TusD. The TusBCD complex interacts with TusE.

The protein resides in the cytoplasm. Functionally, part of a sulfur-relay system required for 2-thiolation of 5-methylaminomethyl-2-thiouridine (mnm(5)s(2)U) at tRNA wobble positions. Accepts sulfur from TusA and transfers it in turn to TusE. The sequence is that of Sulfurtransferase TusD from Shigella boydii serotype 18 (strain CDC 3083-94 / BS512).